A 559-amino-acid chain; its full sequence is 3-aminoavenalumate diazotase (559 aa).

Mg(2+) is bound at residue Ser181. Ala227, Gly332, and Ser336 together coordinate ATP. Glu337 is a binding site for Mg(2+). Asp416 and Arg437 together coordinate ATP.

The protein belongs to the ATP-dependent AMP-binding enzyme family. It depends on Mg(2+) as a cofactor.

It catalyses the reaction 3-aminoavenalumate + nitrite + ATP = 3-diazoavenalumate + AMP + diphosphate + H2O. The catalysed reaction is (E)-3-aminocoumarate + nitrite + ATP + H(+) = (E)-3-diazocoumarate + AMP + diphosphate + H2O. The enzyme catalyses 3-amino-4-hydroxybenzoate + nitrite + ATP + H(+) = 3-diazo-4-hydroxybenzoate + AMP + diphosphate + H2O. In terms of biological role, ligase involved in the biosynthesis of avenalumic acid (AVA). Catalyzes the diazotization of 3-aminoavenalumic acid (3-AAA) to 3-diazoavenalumic acid (3-DAA). It can also act on 3-aminocoumaric acid (3-ACA) and 3-amino-4-hydroxybenzoic acid (3,4-AHBA) with lower activity. The protein is 3-aminoavenalumate diazotase of Streptomyces sp.